The sequence spans 166 residues: Large ribosomal subunit protein uL10 (166 aa).

Belongs to the universal ribosomal protein uL10 family. Part of the ribosomal stalk of the 50S ribosomal subunit. The N-terminus interacts with L11 and the large rRNA to form the base of the stalk. The C-terminus forms an elongated spine to which L12 dimers bind in a sequential fashion forming a multimeric L10(L12)X complex.

Its function is as follows. Forms part of the ribosomal stalk, playing a central role in the interaction of the ribosome with GTP-bound translation factors. This chain is Large ribosomal subunit protein uL10, found in Streptococcus uberis (strain ATCC BAA-854 / 0140J).